A 304-amino-acid chain; its full sequence is C-type lectin domain family 10 member A (304 aa).

The Cytoplasmic segment spans residues 1–35; the sequence is MIYENLQNSRIEEKTQEPGKAPSQSFLWRILSWTH. A helical; Signal-anchor for type II membrane protein membrane pass occupies residues 36–56; sequence LLLFSLGLSLLLLVVVSVIGS. Over 57 to 304 the chain is Extracellular; the sequence is QNSQLRRDLG…ICEMKLAKES (248 aa). N-linked (GlcNAc...) asparagine glycosylation is found at Asn-74 and Asn-166. The C-type lectin domain occupies 172-298; sequence CCPLHWTEHE…QRTFRWICEM (127 aa). Cystine bridges form between Cys-173–Cys-184, Cys-201–Cys-296, and Cys-274–Cys-288.

In terms of assembly, homooligomer. Interacts with SIGLEC1, which may act as a counter-receptor for CLEC10A in lymph node. As to expression, detected in lymph node in the subcapsular sinus, interfollicular regions, T and B-cell boundary and in the areas surrounding high endothelial venules (at protein level). Expressed on the surface of activated macrophages. Expressed in heart, lung, testis, skeletal muscle, spleen, brain, kidney and thymus. Expressed in P388, RAW 264.7 and M1 cell lines.

Its subcellular location is the membrane. In terms of biological role, recognizes terminal galactose and N-acetylgalactosamine units. May participate in the interaction between tumoricidal macrophages and tumor cells. Plays a role in the recruitment of inflammatory monocytes to adipose tissue in diet-induced obesity. In Mus musculus (Mouse), this protein is C-type lectin domain family 10 member A (Clec10a).